Reading from the N-terminus, the 160-residue chain is pH-gated potassium channel KcsA (160 aa).

Topologically, residues 1–27 are cytoplasmic; the sequence is MPPMLSGLLARLVKLLLGRHGSALHWR. The helical transmembrane segment at 28-50 threads the bilayer; sequence AAGAATVLLVIVLLAGSYLAVLA. The Extracellular segment spans residues 51–61; the sequence is ERGAPGAQLIT. The helical; Pore-forming intramembrane region spans 62 to 72; the sequence is YPRALWWSVET. The segment at residues 73–80 is an intramembrane region (pore-forming); the sequence is ATTVGYGD. The short motif at 75–80 is the Selectivity filter element; that stretch reads TVGYGD. At 81–87 the chain is on the extracellular side; it reads LYPVTLW. A helical membrane pass occupies residues 88-111; sequence GRLVAVVVMVAGITSFGLVTAALA. The Cytoplasmic segment spans residues 112–160; the sequence is TWFVGREQERRGHFVRHSEKAAEEAYTRTTRALHERFDRLERMLDDNRR.

This sequence belongs to the potassium channel family. In terms of assembly, homotetramer.

The protein localises to the cell membrane. Acts as a pH-gated potassium ion channel; changing the cytosolic pH from 7 to 4 opens the channel. This chain is pH-gated potassium channel KcsA (kcsA), found in Streptomyces coelicolor (strain ATCC BAA-471 / A3(2) / M145).